A 154-amino-acid chain; its full sequence is Interleukin-2 (154 aa).

The N-terminal stretch at 1–20 is a signal peptide; it reads MYRMQLLSCIALSLALVTNS. The O-linked (GalNAc...) threonine glycan is linked to threonine 23. A disulfide bridge links cysteine 78 with cysteine 126.

The protein belongs to the IL-2 family.

The protein localises to the secreted. Its function is as follows. Cytokine produced by activated CD4-positive helper T-cells and to a lesser extend activated CD8-positive T-cells and natural killer (NK) cells that plays pivotal roles in the immune response and tolerance. Binds to a receptor complex composed of either the high-affinity trimeric IL-2R (IL2RA/CD25, IL2RB/CD122 and IL2RG/CD132) or the low-affinity dimeric IL-2R (IL2RB and IL2RG). Interaction with the receptor leads to oligomerization and conformation changes in the IL-2R subunits resulting in downstream signaling starting with phosphorylation of JAK1 and JAK3. In turn, JAK1 and JAK3 phosphorylate the receptor to form a docking site leading to the phosphorylation of several substrates including STAT5. This process leads to activation of several pathways including STAT, phosphoinositide-3-kinase/PI3K and mitogen-activated protein kinase/MAPK pathways. Functions as a T-cell growth factor and can increase NK-cell cytolytic activity as well. Promotes strong proliferation of activated B-cells and subsequently immunoglobulin production. Plays a pivotal role in regulating the adaptive immune system by controlling the survival and proliferation of regulatory T-cells, which are required for the maintenance of immune tolerance. Moreover, participates in the differentiation and homeostasis of effector T-cell subsets, including Th1, Th2, Th17 as well as memory CD8-positive T-cells. The chain is Interleukin-2 (IL2) from Papio anubis (Olive baboon).